The following is a 676-amino-acid chain: Symportin 1 (676 aa).

Basic residues predominate over residues 1–10 (MGKTRRNRVR). A disordered region spans residues 1–28 (MGKTRRNRVRNRTDPIAKPVKPPTDPEL). The stretch at 183–216 (TILRLLFRLISADIAPQDIYEEAISCLTTLSEDN) is one ARM 1 repeat. The disordered stretch occupies residues 325-385 (KGNQGSRESP…EDDEDDDDDS (61 aa)). Composition is skewed to acidic residues over residues 338–354 (ADEE…DAMD) and 363–385 (EDQE…DDDS). The ARM 2 repeat unit spans residues 420 to 453 (TAVPQLIRLSNLPIDSDESLTIQSHALSALNNIS).

Belongs to the nuclear import and ribosome assembly adapter family. In terms of assembly, component of a hexameric 5S RNP precursor complex, composed of 5S RNA, RRS1, RPF2, RPL5, RPL11 and SYO1; this complex acts as a precursor for ribosome assembly.

Functionally, involved in ribosomal large subunit assembly. The polypeptide is Symportin 1 (Chaetomium thermophilum (strain DSM 1495 / CBS 144.50 / IMI 039719) (Thermochaetoides thermophila)).